A 61-amino-acid polypeptide reads, in one-letter code: Small ribosomal subunit protein uS14 (61 aa).

Zn(2+)-binding residues include cysteine 24, cysteine 27, cysteine 40, and cysteine 43.

Belongs to the universal ribosomal protein uS14 family. Zinc-binding uS14 subfamily. Part of the 30S ribosomal subunit. Contacts proteins S3 and S10. It depends on Zn(2+) as a cofactor.

Functionally, binds 16S rRNA, required for the assembly of 30S particles and may also be responsible for determining the conformation of the 16S rRNA at the A site. The sequence is that of Small ribosomal subunit protein uS14 from Beutenbergia cavernae (strain ATCC BAA-8 / DSM 12333 / CCUG 43141 / JCM 11478 / NBRC 16432 / NCIMB 13614 / HKI 0122).